Consider the following 483-residue polypeptide: Glutamate--tRNA ligase (483 aa).

The short motif at Pro-14 to Thr-24 is the 'HIGH' region element. Residues Lys-253 to Arg-257 carry the 'KMSKS' region motif. An ATP-binding site is contributed by Lys-256.

This sequence belongs to the class-I aminoacyl-tRNA synthetase family. Glutamate--tRNA ligase type 1 subfamily. In terms of assembly, monomer.

Its subcellular location is the cytoplasm. It catalyses the reaction tRNA(Glu) + L-glutamate + ATP = L-glutamyl-tRNA(Glu) + AMP + diphosphate. Functionally, catalyzes the attachment of glutamate to tRNA(Glu) in a two-step reaction: glutamate is first activated by ATP to form Glu-AMP and then transferred to the acceptor end of tRNA(Glu). This chain is Glutamate--tRNA ligase, found in Deinococcus radiodurans (strain ATCC 13939 / DSM 20539 / JCM 16871 / CCUG 27074 / LMG 4051 / NBRC 15346 / NCIMB 9279 / VKM B-1422 / R1).